Consider the following 356-residue polypeptide: S-adenosylmethionine:tRNA ribosyltransferase-isomerase (356 aa).

This sequence belongs to the QueA family. As to quaternary structure, monomer.

It is found in the cytoplasm. The catalysed reaction is 7-aminomethyl-7-carbaguanosine(34) in tRNA + S-adenosyl-L-methionine = epoxyqueuosine(34) in tRNA + adenine + L-methionine + 2 H(+). The protein operates within tRNA modification; tRNA-queuosine biosynthesis. Transfers and isomerizes the ribose moiety from AdoMet to the 7-aminomethyl group of 7-deazaguanine (preQ1-tRNA) to give epoxyqueuosine (oQ-tRNA). This Cronobacter sakazakii (strain ATCC BAA-894) (Enterobacter sakazakii) protein is S-adenosylmethionine:tRNA ribosyltransferase-isomerase.